Reading from the N-terminus, the 371-residue chain is Histidinol-phosphate aminotransferase (371 aa).

An N6-(pyridoxal phosphate)lysine modification is found at lysine 229.

The protein belongs to the class-II pyridoxal-phosphate-dependent aminotransferase family. Histidinol-phosphate aminotransferase subfamily. Homodimer. The cofactor is pyridoxal 5'-phosphate.

The catalysed reaction is L-histidinol phosphate + 2-oxoglutarate = 3-(imidazol-4-yl)-2-oxopropyl phosphate + L-glutamate. Its pathway is amino-acid biosynthesis; L-histidine biosynthesis; L-histidine from 5-phospho-alpha-D-ribose 1-diphosphate: step 7/9. This chain is Histidinol-phosphate aminotransferase, found in Roseiflexus castenholzii (strain DSM 13941 / HLO8).